Reading from the N-terminus, the 802-residue chain is Penicillin G acylase (802 aa).

Positions 1–24 are cleaved as a signal peptide; sequence MKTKWLISVIILFVFIFPQNLVFA. Glu177 contributes to the Ca(2+) binding site. Residues 235–265 constitute a propeptide, spacer peptide; it reads SAVIKASEKVGKERENFVQTSEELGLPLKIG. Residue Ser266 is the Nucleophile of the active site. Asp341 serves as a coordination point for Ca(2+).

Belongs to the peptidase S45 family. As to quaternary structure, heterodimer of an alpha subunit and a beta subunit processed from the same precursor. Ca(2+) is required as a cofactor.

The protein localises to the secreted. The enzyme catalyses a penicillin + H2O = 6-aminopenicillanate + a carboxylate. The chain is Penicillin G acylase (pac) from Priestia megaterium (Bacillus megaterium).